Consider the following 196-residue polypeptide: uncharacterized protein (196 aa).

The first 27 residues, 1 to 27 (MSVLSRAVQLAFVALGLCLFFSNLVAA), serve as a signal peptide directing secretion.

The protein localises to the secreted. This is an uncharacterized protein from Arthroderma benhamiae (strain ATCC MYA-4681 / CBS 112371) (Trichophyton mentagrophytes).